The primary structure comprises 56 residues: Large ribosomal subunit protein bL32 (56 aa).

Belongs to the bacterial ribosomal protein bL32 family.

The sequence is that of Large ribosomal subunit protein bL32 from Edwardsiella ictaluri (strain 93-146).